Reading from the N-terminus, the 379-residue chain is Succinyl-diaminopimelate desuccinylase (379 aa).

A Zn(2+)-binding site is contributed by His70. Asp72 is an active-site residue. Zn(2+) is bound at residue Asp103. Glu137 (proton acceptor) is an active-site residue. The Zn(2+) site is built by Glu138, Glu166, and His352.

It belongs to the peptidase M20A family. DapE subfamily. As to quaternary structure, homodimer. Zn(2+) serves as cofactor. Requires Co(2+) as cofactor.

The catalysed reaction is N-succinyl-(2S,6S)-2,6-diaminopimelate + H2O = (2S,6S)-2,6-diaminopimelate + succinate. It participates in amino-acid biosynthesis; L-lysine biosynthesis via DAP pathway; LL-2,6-diaminopimelate from (S)-tetrahydrodipicolinate (succinylase route): step 3/3. Its function is as follows. Catalyzes the hydrolysis of N-succinyl-L,L-diaminopimelic acid (SDAP), forming succinate and LL-2,6-diaminopimelate (DAP), an intermediate involved in the bacterial biosynthesis of lysine and meso-diaminopimelic acid, an essential component of bacterial cell walls. The protein is Succinyl-diaminopimelate desuccinylase of Burkholderia mallei (strain NCTC 10247).